Consider the following 428-residue polypeptide: Elongation factor 1-alpha (428 aa).

The 213-residue stretch at 5–217 (KPHVNIVFIG…DQIPEPEKPI (213 aa)) folds into the tr-type G domain. The G1 stretch occupies residues 14–21 (GHVDHGKS). Residue 14–21 (GHVDHGKS) participates in GTP binding. Ser-21 serves as a coordination point for Mg(2+). The tract at residues 68–72 (GITID) is G2. Residues 89 to 92 (DAPG) are G3. GTP is bound by residues 89 to 93 (DAPGH) and 144 to 147 (NKMD). The interval 144–147 (NKMD) is G4. Residues 181-183 (SAW) are G5.

It belongs to the TRAFAC class translation factor GTPase superfamily. Classic translation factor GTPase family. EF-Tu/EF-1A subfamily.

It localises to the cytoplasm. It catalyses the reaction GTP + H2O = GDP + phosphate + H(+). Functionally, GTP hydrolase that promotes the GTP-dependent binding of aminoacyl-tRNA to the A-site of ribosomes during protein biosynthesis. This is Elongation factor 1-alpha from Pyrococcus horikoshii (strain ATCC 700860 / DSM 12428 / JCM 9974 / NBRC 100139 / OT-3).